The following is a 441-amino-acid chain: Trigger factor (441 aa).

In terms of domain architecture, PPIase FKBP-type spans 175–260 (GDKVVIDYNS…LVSIMVPKDV (86 aa)).

This sequence belongs to the FKBP-type PPIase family. Tig subfamily.

It localises to the cytoplasm. The enzyme catalyses [protein]-peptidylproline (omega=180) = [protein]-peptidylproline (omega=0). Involved in protein export. Acts as a chaperone by maintaining the newly synthesized protein in an open conformation. Functions as a peptidyl-prolyl cis-trans isomerase. The sequence is that of Trigger factor from Anaplasma marginale (strain St. Maries).